The primary structure comprises 70 residues: MIFKVFYQEKMTEVPVRENTKVLYLEATSEKDVRTKLNKFAYNIEFVQSVTGNHLEYEKENADLTLAEIV.

The protein belongs to the RNA polymerase subunit epsilon family. In terms of assembly, RNAP is composed of a core of 2 alpha, a beta and a beta' subunit. The core is associated with a delta subunit, and at least one of epsilon or omega. When a sigma factor is associated with the core the holoenzyme is formed, which can initiate transcription.

The enzyme catalyses RNA(n) + a ribonucleoside 5'-triphosphate = RNA(n+1) + diphosphate. In terms of biological role, a non-essential component of RNA polymerase (RNAP). In Bacillus cereus (strain Q1), this protein is DNA-directed RNA polymerase subunit epsilon.